The following is a 496-amino-acid chain: NADH-quinone oxidoreductase subunit N (496 aa).

The next 14 helical transmembrane spans lie at 8–28, 37–57, 73–93, 110–130, 131–151, 162–182, 203–223, 235–255, 271–291, 300–320, 341–361, 386–406, 421–441, and 464–484; these read LLST…VGLI, MFPL…YDFF, QFAG…VLST, LLLL…LLTM, YVGL…HPND, LVLG…IYGL, TILA…LVPF, PAPI…AALV, GLIL…LMAF, MAYS…AVSI, GVLF…AVIT, AAVL…AGFV, VWIA…YLSI, and FGMI…TPLA.

Belongs to the complex I subunit 2 family. NDH-1 is composed of 14 different subunits. Subunits NuoA, H, J, K, L, M, N constitute the membrane sector of the complex.

It localises to the cell membrane. The enzyme catalyses a quinone + NADH + 5 H(+)(in) = a quinol + NAD(+) + 4 H(+)(out). NDH-1 shuttles electrons from NADH, via FMN and iron-sulfur (Fe-S) centers, to quinones in the respiratory chain. The immediate electron acceptor for the enzyme in this species is believed to be a menaquinone. Couples the redox reaction to proton translocation (for every two electrons transferred, four hydrogen ions are translocated across the cytoplasmic membrane), and thus conserves the redox energy in a proton gradient. This Desulfitobacterium hafniense (strain DSM 10664 / DCB-2) protein is NADH-quinone oxidoreductase subunit N.